The following is a 628-amino-acid chain: Probable potassium transport system protein Kup (628 aa).

Helical transmembrane passes span 56 to 76 (ILSL…VLLI), 109 to 129 (LILG…TPAI), 141 to 161 (AAPG…TLLF), 174 to 194 (FFGP…VVHI), 209 to 229 (ALAF…AVVL), 253 to 273 (WFSL…AMLL), 295 to 315 (LIVL…TAAF), 343 to 363 (IYVP…VVTF), 372 to 392 (AYGI…FFVI), 400 to 420 (WALC…FFAA), and 425 to 445 (ILDG…LMMT).

The protein belongs to the HAK/KUP transporter (TC 2.A.72) family.

It is found in the cell inner membrane. The enzyme catalyses K(+)(in) + H(+)(in) = K(+)(out) + H(+)(out). Functionally, transport of potassium into the cell. Likely operates as a K(+):H(+) symporter. In Methylibium petroleiphilum (strain ATCC BAA-1232 / LMG 22953 / PM1), this protein is Probable potassium transport system protein Kup.